The primary structure comprises 343 residues: Dihydroorotase (343 aa).

Positions 14 and 16 each coordinate Zn(2+). Residues 16 to 18 (HLR) and asparagine 42 each bind substrate. Lysine 97, histidine 136, histidine 170, and aspartate 242 together coordinate Zn(2+). At lysine 97 the chain carries N6-carboxylysine. Substrate is bound at residue histidine 136. Aspartate 242 is an active-site residue. Substrate-binding residues include histidine 246 and alanine 258.

Belongs to the metallo-dependent hydrolases superfamily. DHOase family. Class II DHOase subfamily. In terms of assembly, homodimer. The cofactor is Zn(2+).

The catalysed reaction is (S)-dihydroorotate + H2O = N-carbamoyl-L-aspartate + H(+). It functions in the pathway pyrimidine metabolism; UMP biosynthesis via de novo pathway; (S)-dihydroorotate from bicarbonate: step 3/3. Its function is as follows. Catalyzes the reversible cyclization of carbamoyl aspartate to dihydroorotate. The sequence is that of Dihydroorotase from Helicobacter hepaticus (strain ATCC 51449 / 3B1).